A 469-amino-acid polypeptide reads, in one-letter code: Desmin (469 aa).

Residues 2–107 (SQAYSSSQRV…QEFLTTRTNE (106 aa)) are head. Residue S7 is modified to Phosphoserine; by CDK1. Residue S12 is modified to Phosphoserine; by AURKB. R16 is modified (omega-N-methylarginine). T17 carries the phosphothreonine; by AURKB and ROCK1 modification. 2 positions are modified to phosphoserine; by CDK1: S28 and S32. Asymmetric dimethylarginine; alternate is present on R37. R37 carries the omega-N-methylarginine; alternate modification. At S45 the chain carries Phosphoserine. R58 is subject to ADP-ribosylarginine. A Phosphoserine; by AURKB modification is found at S60. Omega-N-methylarginine is present on R70. T76 is subject to Phosphothreonine; by ROCK1. S81 is modified (phosphoserine). Positions 107–415 (EKVELQELND…KLLEGEESRI (309 aa)) constitute an IF rod domain. Residues 108-140 (KVELQELNDRFANYIEKVRFLEQQNAALAAEVN) form a coil 1A region. The linker 1 stretch occupies residues 141–150 (RLKGREPTRV). Positions 151-251 (AEIYEEELRE…HEEEIRELQA (101 aa)) are coil 1B. The interval 252 to 267 (QLQEQQVQVEMDMSKP) is linker 12. An interaction with NEB region spans residues 267-414 (PDLTAALRDI…RKLLEGEESR (148 aa)). The segment at 268–286 (DLTAALRDIRAQYETIAAK) is coil 2A. The interval 287–294 (NISEAEEW) is linker 2. S289, S357, S360, and S423 each carry phosphoserine. Positions 295–411 (YKSKVSDLTQ…ATYRKLLEGE (117 aa)) are coil 2B. Residues 412-469 (ESRINLPIQTYSALNFRETSPEQRGSEVHTKKTVMIKTIETRDGEVVSEATQQQHEVL) are tail. Residues 437-452 (SEVHTKKTVMIKTIET) are interaction with CRYAB.

This sequence belongs to the intermediate filament family. Homomer. Interacts with DST. Interacts with MTM1. Interacts with EPPK1; interaction is dependent of higher-order structure of intermediate filament. Interacts with CRYAB. Interacts with NEB (via nebulin repeats 160-164). Interacts (via rod region) with NEBL (via nebulin repeats 1-5). Interacts with ASB2; the interaction targets DES for proteasomal degradation. Interacts with PKP1. Interacts with FLII. Post-translationally, ADP-ribosylation prevents ability to form intermediate filaments. In terms of processing, phosphorylation at Ser-7, Ser-28 and Ser-32 by CDK1, phosphorylation at Ser-60 by AURKB and phosphorylation at Thr-76 by ROCK1 contribute to efficient separation of desmin intermediate filaments during mitosis. Ubiquitination by a SCF-like complex containing ASB2 leads to proteasomal degradation.

It localises to the cytoplasm. The protein resides in the myofibril. Its subcellular location is the sarcomere. It is found in the z line. The protein localises to the cell membrane. It localises to the sarcolemma. The protein resides in the nucleus. Its subcellular location is the cell tip. It is found in the nucleus envelope. In terms of biological role, muscle-specific type III intermediate filament essential for proper muscular structure and function. Plays a crucial role in maintaining the structure of sarcomeres, inter-connecting the Z-disks and forming the myofibrils, linking them not only to the sarcolemmal cytoskeleton, but also to the nucleus and mitochondria, thus providing strength for the muscle fiber during activity. In adult striated muscle they form a fibrous network connecting myofibrils to each other and to the plasma membrane from the periphery of the Z-line structures. May act as a sarcomeric microtubule-anchoring protein: specifically associates with detyrosinated tubulin-alpha chains, leading to buckled microtubules and mechanical resistance to contraction. Required for nuclear membrane integrity, via anchoring at the cell tip and nuclear envelope, resulting in maintenance of microtubule-derived intracellular mechanical forces. Contributes to the transcriptional regulation of the NKX2-5 gene in cardiac progenitor cells during a short period of cardiomyogenesis and in cardiac side population stem cells in the adult. Plays a role in maintaining an optimal conformation of nebulette (NEB) on heart muscle sarcomeres to bind and recruit cardiac alpha-actin. In Canis lupus familiaris (Dog), this protein is Desmin (DES).